The sequence spans 822 residues: Dimethyl sulfoxide/trimethylamine N-oxide reductase (822 aa).

The segment at residues 1-42 (MTKLSGQELHAELSRRAFLSYTAAVGALGLCGTSLLAQGARA) is a signal peptide (tat-type signal). Mo-bis(molybdopterin guanine dinucleotide) contacts are provided by residues tryptophan 158, 158–160 (WKS), serine 189, 232–233 (KT), 262–263 (IN), 283–285 (QTD), 364–365 (WS), arginine 368, asparagine 476, histidine 480, 500–501 (QD), arginine 523, aspartate 553, 683–686 (ASHP), arginine 689, 691–693 (HSQ), asparagine 779, and 796–797 (GQ).

It belongs to the prokaryotic molybdopterin-containing oxidoreductase family. In terms of assembly, homodimer. Mo-bis(molybdopterin guanine dinucleotide) is required as a cofactor. Post-translationally, predicted to be exported by the Tat system. The position of the signal peptide cleavage has been experimentally proven.

It is found in the periplasm. It catalyses the reaction dimethyl sulfide + a menaquinone + H2O = dimethyl sulfoxide + a menaquinol. The enzyme catalyses trimethylamine + 2 Fe(III)-[cytochrome c] + H2O = trimethylamine N-oxide + 2 Fe(II)-[cytochrome c] + 3 H(+). Catalyzes the reduction of dimethyl sulfoxide (DMSO) and trimethylamine N-oxide (TMAO) to dimethyl sulfide (DMS) and trimethylamine, respectively. The terminal DMSO reductase can also use various sulfoxides and N-oxide compounds as terminal electron acceptor in addition to DMSO and TMAO. The polypeptide is Dimethyl sulfoxide/trimethylamine N-oxide reductase (dmsA) (Cereibacter sphaeroides (Rhodobacter sphaeroides)).